The primary structure comprises 60 residues: MAAPKRKKSKAKTAMRKAQWMRKLTVPGLSLCPECGQPKTPHRVCPHCGYYKDKEVVEVV.

Belongs to the bacterial ribosomal protein bL32 family.

The polypeptide is Large ribosomal subunit protein bL32 (Persephonella marina (strain DSM 14350 / EX-H1)).